Reading from the N-terminus, the 292-residue chain is UDP-N-acetylenolpyruvoylglucosamine reductase (292 aa).

Positions 21-186 (QAGGLVDYLA…ISATFELQPD (166 aa)) constitute an FAD-binding PCMH-type domain. Residue Arg165 is part of the active site. The active-site Proton donor is the Ser215. Residue Glu285 is part of the active site.

The protein belongs to the MurB family. It depends on FAD as a cofactor.

The protein resides in the cytoplasm. The enzyme catalyses UDP-N-acetyl-alpha-D-muramate + NADP(+) = UDP-N-acetyl-3-O-(1-carboxyvinyl)-alpha-D-glucosamine + NADPH + H(+). The protein operates within cell wall biogenesis; peptidoglycan biosynthesis. Functionally, cell wall formation. The sequence is that of UDP-N-acetylenolpyruvoylglucosamine reductase from Leuconostoc mesenteroides subsp. mesenteroides (strain ATCC 8293 / DSM 20343 / BCRC 11652 / CCM 1803 / JCM 6124 / NCDO 523 / NBRC 100496 / NCIMB 8023 / NCTC 12954 / NRRL B-1118 / 37Y).